Reading from the N-terminus, the 706-residue chain is Dual specificity calcium/calmodulin-dependent 3',5'-cyclic nucleotide phosphodiesterase 1C (706 aa).

Residue Met-1 is modified to N-acetylmethionine. A calmodulin-binding region spans residues 123 to 146 (EKPRFKSIVHAVQAGIFVERMYRR). Residues 151–528 (VGLSYPPAVI…ERWRAKVPKE (378 aa)) form the PDEase domain. The active-site Proton donor is the His-228. Zn(2+) contacts are provided by His-232, His-268, Asp-269, and Asp-376. Asp-269 is a binding site for Mg(2+). Disordered stretches follow at residues 453–497 (LIDE…INNS) and 524–655 (KVPK…IKPP). 2 stretches are compositionally biased toward polar residues: residues 456–476 (ESSQTGGTGQRRSSLNSINSS) and 483–497 (VKSSGSDGSAPINNS). Composition is skewed to basic and acidic residues over residues 524 to 554 (KVPKEEKAKKEAEEKARLAAEEKQKEMEAKS), 580 to 597 (RKGDNPRGKNSKGEKAGE), and 603 to 630 (DLKDGKNKADKKDHSNTGNESKKTDGTK). The span at 638–647 (APSTSSTSRI) shows a compositional bias: polar residues.

It belongs to the cyclic nucleotide phosphodiesterase family. PDE1 subfamily. In terms of assembly, homodimer. Zn(2+) serves as cofactor. Mg(2+) is required as a cofactor. In terms of tissue distribution, highly expressed in testis and at moderate levels in heart. As to expression, expressed at a moderate level in brain, the cerebellum, testis, heart and olfactory epithelium. Highly expressed in olfactory epithelium and at very low levels, if any, in other tissues. In the cochlea, expressed in the inner and outer hair cells (at protein level). In the brain, highly expressed in the neurons of the granule layer of the cerebellum, some Purkinje cells, the central amygdaloid nucleus, and the interpolar spinal trigem nucleus and, at moderate levels, in the glomerular and external plexiform layer of the olfactory bulb as well as in parts of the caudate-putamen and olfactory tubercle.

The protein resides in the lysosome. It catalyses the reaction a nucleoside 3',5'-cyclic phosphate + H2O = a nucleoside 5'-phosphate + H(+). It carries out the reaction 3',5'-cyclic GMP + H2O = GMP + H(+). The catalysed reaction is 3',5'-cyclic AMP + H2O = AMP + H(+). Type I PDE are activated by the binding of calmodulin in the presence of Ca(2+). Different splice variants may have different sensitivities to Ca(2+). Its activity is regulated as follows. Exhibits a higher sensitivity to Ca(2+) stimulation than isoforms 1 and 2. Functionally, calmodulin-dependent cyclic nucleotide phosphodiesterase with a dual specificity for cAMP and cGMP, which are key regulators of many important physiological processes. Exhibits high affinity for both cAMP and cGMP. Modulates the amplitude and duration of the cAMP signal in sensory cilia in response to odorant stimulation, hence contributing to the generation of action potentials. Regulates smooth muscle cell proliferation. Regulates the stability of growth factor receptors, including PDGFRB. This is Dual specificity calcium/calmodulin-dependent 3',5'-cyclic nucleotide phosphodiesterase 1C from Mus musculus (Mouse).